The primary structure comprises 477 residues: Glycogen synthase (477 aa).

ADP-alpha-D-glucose is bound at residue K15.

This sequence belongs to the glycosyltransferase 1 family. Bacterial/plant glycogen synthase subfamily.

The catalysed reaction is [(1-&gt;4)-alpha-D-glucosyl](n) + ADP-alpha-D-glucose = [(1-&gt;4)-alpha-D-glucosyl](n+1) + ADP + H(+). Its pathway is glycan biosynthesis; glycogen biosynthesis. Functionally, synthesizes alpha-1,4-glucan chains using ADP-glucose. In Streptococcus pneumoniae (strain Hungary19A-6), this protein is Glycogen synthase.